A 678-amino-acid chain; its full sequence is Putative pentatricopeptide repeat-containing protein At3g18840 (678 aa).

PPR repeat units follow at residues 22 to 56 (TAVSSNQLVNLYSKSGLLREARNVFDEMLERNVYS), 57 to 84 (WNAVIAAYVKFNNVKEARELFESDNCER), 85 to 116 (DLITYNTLLSGFAKTDGCESEAIEMFGEMHRK), 124 to 158 (DDFTVTTMVKLSAKLTNVFYGEQLHGVLVKTGNDG), 159 to 190 (TKFAVSSLIHMYSKCGKFKEVCNIFNGSCVEF), 192 to 222 (DSVARNAMIAAYCREGDIDKALSVFWRNPEL), 224 to 258 (DTISWNTLIAGYAQNGYEEEALKMAVSMEENGLKW), 259 to 293 (DEHSFGAVLNVLSSLKSLKIGKEVHARVLKNGSYS), 294 to 324 (NKFVSSGIVDVYCKCGNMKYAESAHLLYGFG), 325 to 359 (NLYSASSMIVGYSSQGKMVEAKRLFDSLSEKNLVV), 360 to 390 (WTAMFLGYLNLRQPDSVLELARAFIANETNT), 392 to 426 (DSLVMVSVLGACSLQAYMEPGKEIHGHSLRTGILM), 427 to 457 (DKKLVTAFVDMYSKCGNVEYAERIFDSSFER), 458 to 492 (DTVMYNAMIAGCAHHGHEAKSFQHFEDMTEGGFKP), 493 to 528 (DEITFMALLSACRHRGLVLEGEKYFKSMIEAYNISP), and 529 to 563 (ETGHYTCMIDLYGKAYRLDKAIELMEGIDQVEKDA). A type E motif region spans residues 565-640 (ILGAFLNACS…FSGCSWANID (76 aa)). Residues 641–671 (KQFHMFTSSDISHYETEAIYAMLHFVTKDLS) form a type E(+) motif region.

This sequence belongs to the PPR family. PCMP-E subfamily.

The polypeptide is Putative pentatricopeptide repeat-containing protein At3g18840 (PCMP-E92) (Arabidopsis thaliana (Mouse-ear cress)).